A 540-amino-acid chain; its full sequence is 2,3-bisphosphoglycerate-independent phosphoglycerate mutase (540 aa).

Mn(2+) is bound by residues Asp24 and Ser74. The active-site Phosphoserine intermediate is Ser74. Substrate-binding positions include His135, 165-166, Arg197, Arg203, 268-271, and Lys341; these read RD and RPDR. Mn(2+) is bound by residues Asp408, His412, Asp449, His450, and His467.

This sequence belongs to the BPG-independent phosphoglycerate mutase family. Monomer. Requires Mn(2+) as cofactor.

It carries out the reaction (2R)-2-phosphoglycerate = (2R)-3-phosphoglycerate. It functions in the pathway carbohydrate degradation; glycolysis; pyruvate from D-glyceraldehyde 3-phosphate: step 3/5. Its function is as follows. Catalyzes the interconversion of 2-phosphoglycerate and 3-phosphoglycerate. This chain is 2,3-bisphosphoglycerate-independent phosphoglycerate mutase, found in Prochlorococcus marinus (strain SARG / CCMP1375 / SS120).